Reading from the N-terminus, the 153-residue chain is 6,7-dimethyl-8-ribityllumazine synthase (153 aa).

5-amino-6-(D-ribitylamino)uracil contacts are provided by residues phenylalanine 21, 55–57, and 79–81; these read AFE and TVI. 84–85 provides a ligand contact to (2S)-2-hydroxy-3-oxobutyl phosphate; sequence AT. Histidine 87 serves as the catalytic Proton donor. Residue phenylalanine 112 participates in 5-amino-6-(D-ribitylamino)uracil binding. Arginine 126 contributes to the (2S)-2-hydroxy-3-oxobutyl phosphate binding site.

Belongs to the DMRL synthase family. As to quaternary structure, forms an icosahedral capsid composed of 60 subunits, arranged as a dodecamer of pentamers.

The enzyme catalyses (2S)-2-hydroxy-3-oxobutyl phosphate + 5-amino-6-(D-ribitylamino)uracil = 6,7-dimethyl-8-(1-D-ribityl)lumazine + phosphate + 2 H2O + H(+). It participates in cofactor biosynthesis; riboflavin biosynthesis; riboflavin from 2-hydroxy-3-oxobutyl phosphate and 5-amino-6-(D-ribitylamino)uracil: step 1/2. Functionally, catalyzes the formation of 6,7-dimethyl-8-ribityllumazine by condensation of 5-amino-6-(D-ribitylamino)uracil with 3,4-dihydroxy-2-butanone 4-phosphate. This is the penultimate step in the biosynthesis of riboflavin. The sequence is that of 6,7-dimethyl-8-ribityllumazine synthase from Bacillus cereus (strain ATCC 10987 / NRS 248).